A 481-amino-acid chain; its full sequence is Thiol protease (481 aa).

The Calpain catalytic domain occupies 169-481 (DLREQALSST…ENFWYIAYMY (313 aa)). Residues cysteine 229, histidine 406, and asparagine 426 contribute to the active site.

It belongs to the peptidase C2 family.

With respect to regulation, inactive below 20 degrees Celsius and pH 6.0. Inhibited by divalent cations. Its function is as follows. Thiol protease. Probably an important virulence factor. In Porphyromonas gingivalis (strain ATCC BAA-308 / W83), this protein is Thiol protease (tpr).